Here is a 357-residue protein sequence, read N- to C-terminus: Isopentenyl-diphosphate delta-isomerase (357 aa).

6–7 (RK) contributes to the substrate binding site. FMN contacts are provided by residues S62, 63 to 65 (AMT), S93, and N122. Substrate is bound at residue 93-95 (SQR). Residue Q156 participates in substrate binding. Residue E157 coordinates Mg(2+). Residues K186, T216, 267–269 (GVR), and 288–289 (AL) each bind FMN.

The protein belongs to the IPP isomerase type 2 family. In terms of assembly, homooctamer. Dimer of tetramers. FMN serves as cofactor. It depends on NADPH as a cofactor. The cofactor is Mg(2+).

Its subcellular location is the cytoplasm. It catalyses the reaction isopentenyl diphosphate = dimethylallyl diphosphate. In terms of biological role, involved in the biosynthesis of isoprenoids. Catalyzes the 1,3-allylic rearrangement of the homoallylic substrate isopentenyl (IPP) to its allylic isomer, dimethylallyl diphosphate (DMAPP). This Methanothrix thermoacetophila (strain DSM 6194 / JCM 14653 / NBRC 101360 / PT) (Methanosaeta thermophila) protein is Isopentenyl-diphosphate delta-isomerase.